We begin with the raw amino-acid sequence, 266 residues long: Inositol-1-monophosphatase (266 aa).

Residues glutamate 69, aspartate 86, leucine 88, and aspartate 89 each contribute to the Mg(2+) site. Position 69 (glutamate 69) interacts with substrate. Substrate-binding positions include 88 to 91 (LDGT), arginine 185, and aspartate 214. Aspartate 214 is a binding site for Mg(2+).

Belongs to the inositol monophosphatase superfamily. It depends on Mg(2+) as a cofactor.

The catalysed reaction is a myo-inositol phosphate + H2O = myo-inositol + phosphate. The chain is Inositol-1-monophosphatase (suhB) from Mesorhizobium japonicum (strain LMG 29417 / CECT 9101 / MAFF 303099) (Mesorhizobium loti (strain MAFF 303099)).